Reading from the N-terminus, the 397-residue chain is RNA binding protein fox-1 homolog 1 (397 aa).

Positions 1-121 are disordered; sequence MNCEREQLRG…NKSQPKRLHV (121 aa). Positions 70–87 are enriched in polar residues; the sequence is QTHSEQSPADTSAQTVSG. The span at 88-99 shows a compositional bias: low complexity; the sequence is TATQTDDAAPTD. Over residues 100-113 the composition is skewed to polar residues; sequence GQPQTQPSENTENK. The 77-residue stretch at 117–193 folds into the RRM domain; the sequence is KRLHVSNIPF…RKIEVNNATA (77 aa). The residue at position 317 (Arg317) is an Asymmetric dimethylarginine. Arg388 is modified (omega-N-methylarginine).

Binds to the C-terminus of ATXN2. As to expression, predominantly expressed in muscle and brain.

It is found in the nucleus. The protein localises to the cytoplasm. Its function is as follows. RNA-binding protein that regulates alternative splicing events by binding to 5'-UGCAUGU-3' elements. Regulates alternative splicing of tissue-specific exons and of differentially spliced exons during erythropoiesis. The polypeptide is RNA binding protein fox-1 homolog 1 (RBFOX1) (Homo sapiens (Human)).